The following is a 325-amino-acid chain: tRNA uridine(34) hydroxylase (325 aa).

One can recognise a Rhodanese domain in the interval 122–218 (EENRCLVLDV…YGQAMGTGKW (97 aa)). The active-site Cysteine persulfide intermediate is cysteine 178.

It belongs to the TrhO family.

The enzyme catalyses uridine(34) in tRNA + AH2 + O2 = 5-hydroxyuridine(34) in tRNA + A + H2O. In terms of biological role, catalyzes oxygen-dependent 5-hydroxyuridine (ho5U) modification at position 34 in tRNAs. The protein is tRNA uridine(34) hydroxylase of Chlamydia felis (strain Fe/C-56) (Chlamydophila felis).